The primary structure comprises 594 residues: MTTGSALYIPPYKADDQDVVVELNNRFGPDAFTAQATRTGMPVLWVARAKLVEVLTFLRNLPKPYVMLYDLHGVDERLRTKRQGLPSGADFTVFYHLLSIERNSDVMIKVALSESDLSVPTVTGIWPNASWYEREVWDMFGIDFPGHPHLTRIMMPPTWEGHPLRKDFPARATEFDPFSLNLAKQQLEEEAARFRPEDWGMKRSGTNEDYMFLNLGPNHPSAHGAFRIILQLDGEEIVDCVPDIGYHHRGAEKMAERQSWHSFIPYTDRIDYLGGVMNNLPYVLSVEKLAGIKVPDRVDTIRIMMAEFFRITSHLLFLGTYIQDVGAMTPVFFTFTDRQRAYKVIEAITGFRLHPAWYRIGGVAHDLPNGWERLVKEFIDWMPKRLDEYQKAALDNSILKGRTIGVAAYNTKEALEWGVTGAGLRSTGCDFDLRKARPYSGYENFEFEVPLAANGDAYDRCIVRVEEMRQSLKIIEQCMRNMPAGPYKADHPLTTPPPKERTLQHIETLITHFLQVSWGPVMPANESFQMIEATKGINSYYLTSDGGTMSYRTRIRTPSFPHLQQIPSVIKGEMVADLIAYLGSIDFVMADVDR.

The NADH dehydrogenase I subunit C stretch occupies residues 1-185; the sequence is MTTGSALYIP…DPFSLNLAKQ (185 aa). An NADH dehydrogenase I subunit D region spans residues 209–594; that stretch reads DYMFLNLGPN…IDFVMADVDR (386 aa).

It in the N-terminal section; belongs to the complex I 30 kDa subunit family. This sequence in the C-terminal section; belongs to the complex I 49 kDa subunit family. NDH-1 is composed of 13 different subunits. Subunits NuoB, CD, E, F, and G constitute the peripheral sector of the complex.

The protein resides in the cell inner membrane. It carries out the reaction a quinone + NADH + 5 H(+)(in) = a quinol + NAD(+) + 4 H(+)(out). Its function is as follows. NDH-1 shuttles electrons from NADH, via FMN and iron-sulfur (Fe-S) centers, to quinones in the respiratory chain. The immediate electron acceptor for the enzyme in this species is believed to be ubiquinone. Couples the redox reaction to proton translocation (for every two electrons transferred, four hydrogen ions are translocated across the cytoplasmic membrane), and thus conserves the redox energy in a proton gradient. In Pseudomonas fluorescens (strain SBW25), this protein is NADH-quinone oxidoreductase subunit C/D.